Consider the following 169-residue polypeptide: Ribosome maturation factor RimM (169 aa).

Residues 95–168 enclose the PRC barrel domain; the sequence is PPDTAYIHDL…EMTIRRFDEF (74 aa).

The protein belongs to the RimM family. Binds ribosomal protein uS19.

The protein resides in the cytoplasm. Functionally, an accessory protein needed during the final step in the assembly of 30S ribosomal subunit, possibly for assembly of the head region. Essential for efficient processing of 16S rRNA. May be needed both before and after RbfA during the maturation of 16S rRNA. It has affinity for free ribosomal 30S subunits but not for 70S ribosomes. This is Ribosome maturation factor RimM from Prosthecochloris aestuarii (strain DSM 271 / SK 413).